A 105-amino-acid polypeptide reads, in one-letter code: Circadian clock oscillator protein KaiB1 (105 aa).

The protein belongs to the KaiB family. Homotetramer in solution and crystals formed by 2 dimers. Only elutes as a homotetramer in size exclusion chromatography, interacts with KaiC1 and KaiC3. The KaiABC complex composition changes during the circadian cycle to control KaiC phosphorylation. Complexes KaiC(6), KaiA(2-4):KaiC(6), KaiB(6):KaiC(6) and KaiC(6):KaiB(6):KaiA(12) are among the most important forms, many form cooperatively. Undergoes a major conformational rearrangment; in the free state forms homotetramers as a dimer of dimers. When bound to the CI domain of KaiC switches to a monomeric thioredoxin-fold (KaiB(fs)). KaiB(fs) binds CikA, leading it to dephosphorylate phospho-RpaA.

In terms of biological role, key component of the KaiABC oscillator complex, which constitutes the main circadian regulator in cyanobacteria. Complex composition changes during the circadian cycle to control KaiC phosphorylation. KaiA stimulates KaiC autophosphorylation, while KaiB sequesters KaiA, leading to KaiC autodephosphorylation. Phospho-Ser-431 KaiC accumulation triggers binding of KaiB to form the KaiB(6):KaiC(6) complex, leading to changes in output regulators CikA and SasA. KaiB switches to a thioredoxin-like fold (KaiB(fs)) when bound to KaiC. KaiB(6):KaiC(6) formation exposes a site for KaiA binding that sequesters KaiA from KaiC, making the KaiC(6):KaiB(6):KaiA(12) complex that results in KaiC autodephosphorylation. Its function is as follows. Component of the oscillator and circadian clock in this organism, enhances fitness in a rhythmic environment. The homotetramer reduces the ATPase activity of KaiC3 by 35%. A metamorphic protein which reversibly switches between an inactive tetrameric fold and a rare, thioredoxin-like monomeric fold (KaiB(fs)). KaiB(fs) binds phospho-KaiC, KaiA and CikA. KaiA and CikA compete for binding to KaiB(fs), and KaiB(fs) and SasA compete for binding to KaiC, thus the clock oscillator and output signal pathway are tightly coupled. This is Circadian clock oscillator protein KaiB1 from Synechocystis sp. (strain ATCC 27184 / PCC 6803 / Kazusa).